We begin with the raw amino-acid sequence, 361 residues long: Putative F-box protein At3g18340 (361 aa).

The F-box domain maps to 1 to 46; sequence MASGKLPWELEEEILCRLPPGSLVRLRSVCKHWNDLYNDKWFIKKS.

The protein is Putative F-box protein At3g18340 of Arabidopsis thaliana (Mouse-ear cress).